The following is a 166-amino-acid chain: Phospholipase A2 inhibitor clone 08 (166 aa).

The signal sequence occupies residues 1–19 (MRLILLSSLLLLGIFLANG). Positions 46 to 161 (LKGAFLTVHR…CDDNLLVVCE (116 aa)) constitute a C-type lectin domain. 2 disulfide bridges follow: Cys-83-Cys-160 and Cys-138-Cys-152. Residue Asn-122 is glycosylated (N-linked (GlcNAc...) asparagine).

Belongs to the alpha-type phospholipase A2 inhibitor family. In terms of assembly, homotrimer; non-covalently linked. Expressed by the liver.

It is found in the secreted. In terms of biological role, this phospholipase A2 inhibitor binds directly phospholipase A2 in the presence or absence of calcium. The polypeptide is Phospholipase A2 inhibitor clone 08 (Bothrops moojeni (Lance-headed viper)).